Consider the following 565-residue polypeptide: Protein unc-87 (565 aa).

Residues 1–27 (MLSFNNTTSASSFQSASSRYLMSSSSS) show a composition bias toward low complexity. 2 disordered regions span residues 1–83 (MLSF…TTNS) and 237–262 (IPSQ…RNTN). Basic and acidic residues predominate over residues 54-69 (EALERLRPNTASRERN). Calponin-like repeat units lie at residues 237–262 (IPSQ…RNTN), 285–310 (VRLQ…RDVC), and 338–363 (VRLQ…RRET). Over residues 250-262 (KLMTNFGTPRNTN) the composition is skewed to polar residues. Over residues 369–381 (SKHPEYDHEKPDQ) the composition is skewed to basic and acidic residues. Residues 369–400 (SKHPEYDHEKPDQSEIPLQSGTNKFASQKGMT) are disordered. A compositionally biased stretch (polar residues) spans 384–398 (IPLQSGTNKFASQKG). Calponin-like repeat units follow at residues 384-409 (IPLQ…RRET), 431-456 (IPSQ…RWEV), 472-497 (VRLQ…RNTT), and 517-542 (IPSQ…RDVK).

Belongs to the calponin family. As to quaternary structure, monomer. Interacts with F-actin. Interacts with myosin. Expressed in the body wall muscles. Isoform a: Expression in the pharynx, anal depressor muscle, uterine muscle, vulva and unidentified neurons in the head and the ventral region. Isoform b: Expression in the body wall muscles, spermatheca, vulva and in the myoepithelial sheath.

The protein localises to the cytoplasm. It is found in the myofibril. The protein resides in the sarcomere. Its subcellular location is the i band. Thin filament-associated protein that is implicated in actin bundling and actin filament dynamics. Exhibits F-actin cross-linking activity. Required for the maintenance of sarcomeric actin organization in striated muscles. Competes with unc-60 isoform b for actin binding and protects actin filaments from depolymerization by unc-60, thereby contributing to actin filament stability. Cooperates with myosin to form actomyosin bundles and inhibits actomyosin ATPase activity and actomyosin motility. Might protect the myofilaments from mechanical stress. Its function is as follows. Acts as a negative regulator of myosin-dependent contractility of smooth muscle-like cells in the somatic gonad. In Caenorhabditis elegans, this protein is Protein unc-87 (unc-87).